The following is an 849-amino-acid chain: Membrane protein-large ribosomal subunit bL9 fusion protein (849 aa).

Residues 1-680 (MFSKNKHNTK…TQLEGTNIKT (680 aa)) form a unknown region. Helical transmembrane passes span 11-31 (FIVI…FDFQ) and 64-84 (IIFF…IISF). Residues 214 to 342 (KTLAIAMIAF…GGDQVVVNIE (129 aa)) form the GGDEF domain. The tract at residues 681 to 849 (VTDTLKHFLK…FLNVTERKSK (169 aa)) is large ribosomal subunit protein bL9.

It belongs to the bacterial ribosomal protein bL9 family.

It localises to the cell membrane. In terms of biological role, binds to the 23S rRNA. The chain is Membrane protein-large ribosomal subunit bL9 fusion protein from Aster yellows witches'-broom phytoplasma (strain AYWB).